The sequence spans 231 residues: Probable glutathione S-transferase (231 aa).

In terms of domain architecture, GST N-terminal spans P4 to A96. Glutathione-binding positions include S14, Q43, V57, Q80–S81, Q124, and N128–K130. The GST C-terminal domain maps to N105–E227.

This sequence belongs to the GST superfamily. Zeta family. In terms of assembly, homodimer.

It carries out the reaction RX + glutathione = an S-substituted glutathione + a halide anion + H(+). In terms of biological role, probable glutathione S-transferase. The protein is Probable glutathione S-transferase of Coccidioides immitis (strain RS) (Valley fever fungus).